The chain runs to 318 residues: Aspartate carbamoyltransferase catalytic subunit (318 aa).

Carbamoyl phosphate contacts are provided by R66 and T67. Residue K94 participates in L-aspartate binding. Residues R116, H144, and Q147 each contribute to the carbamoyl phosphate site. L-aspartate is bound by residues R177 and R231. Positions 272 and 273 each coordinate carbamoyl phosphate.

The protein belongs to the aspartate/ornithine carbamoyltransferase superfamily. ATCase family. Heterododecamer (2C3:3R2) of six catalytic PyrB chains organized as two trimers (C3), and six regulatory PyrI chains organized as three dimers (R2).

The catalysed reaction is carbamoyl phosphate + L-aspartate = N-carbamoyl-L-aspartate + phosphate + H(+). It functions in the pathway pyrimidine metabolism; UMP biosynthesis via de novo pathway; (S)-dihydroorotate from bicarbonate: step 2/3. Catalyzes the condensation of carbamoyl phosphate and aspartate to form carbamoyl aspartate and inorganic phosphate, the committed step in the de novo pyrimidine nucleotide biosynthesis pathway. The polypeptide is Aspartate carbamoyltransferase catalytic subunit (Frankia casuarinae (strain DSM 45818 / CECT 9043 / HFP020203 / CcI3)).